The following is a 129-amino-acid chain: M-zodatoxin-Lt8h (129 aa).

An N-terminal signal peptide occupies residues 1 to 20; the sequence is MKYFVVALALVAAFACIAES. Positions 21–60 are excised as a propeptide; the sequence is KPAESEHELAEVEEENELADLEDAVWLEDLADLSDLEETR.

The protein belongs to the cationic peptide 06 (cytoinsectotoxin) family. As to expression, expressed by the venom gland.

The protein resides in the secreted. Its function is as follows. Insecticidal, cytolytic and antimicrobial peptide. Has insecticidal activity against the flesh fly S.carnaria. Has antibacterial activity against the Gram-negative bacteria E.coli. Forms voltage-dependent, ion-permeable channels in membranes. At high concentration causes cell membrane lysis. The chain is M-zodatoxin-Lt8h (cit 1-11) from Lachesana tarabaevi (Spider).